Here is a 262-residue protein sequence, read N- to C-terminus: Hydroxyethylthiazole kinase (262 aa).

Met-44 contacts substrate. The ATP site is built by Arg-118 and Thr-166. Residue Gly-193 participates in substrate binding.

This sequence belongs to the Thz kinase family. The cofactor is Mg(2+).

It catalyses the reaction 5-(2-hydroxyethyl)-4-methylthiazole + ATP = 4-methyl-5-(2-phosphooxyethyl)-thiazole + ADP + H(+). The protein operates within cofactor biosynthesis; thiamine diphosphate biosynthesis; 4-methyl-5-(2-phosphoethyl)-thiazole from 5-(2-hydroxyethyl)-4-methylthiazole: step 1/1. Its function is as follows. Catalyzes the phosphorylation of the hydroxyl group of 4-methyl-5-beta-hydroxyethylthiazole (THZ). This is Hydroxyethylthiazole kinase from Chlamydia caviae (strain ATCC VR-813 / DSM 19441 / 03DC25 / GPIC) (Chlamydophila caviae).